A 187-amino-acid polypeptide reads, in one-letter code: Probable nicotinate-nucleotide adenylyltransferase (187 aa).

The protein belongs to the NadD family.

The catalysed reaction is nicotinate beta-D-ribonucleotide + ATP + H(+) = deamido-NAD(+) + diphosphate. Its pathway is cofactor biosynthesis; NAD(+) biosynthesis; deamido-NAD(+) from nicotinate D-ribonucleotide: step 1/1. In terms of biological role, catalyzes the reversible adenylation of nicotinate mononucleotide (NaMN) to nicotinic acid adenine dinucleotide (NaAD). The chain is Probable nicotinate-nucleotide adenylyltransferase from Agrobacterium fabrum (strain C58 / ATCC 33970) (Agrobacterium tumefaciens (strain C58)).